The following is a 371-amino-acid chain: Queuine tRNA-ribosyltransferase (371 aa).

Aspartate 90 acts as the Nucleophile in catalysis. The Proton acceptor role is filled by aspartate 90. Substrate contacts are provided by residues aspartate 90–phenylalanine 94, serine 91, aspartate 144, glutamine 189, and glycine 215. The tract at residues glycine 246–asparagine 252 is RNA binding. Aspartate 265 (nucleophile) is an active-site residue. Residues threonine 270–arginine 274 are RNA binding; important for wobble base 34 recognition. Residues cysteine 303, cysteine 305, cysteine 308, and histidine 334 each contribute to the Zn(2+) site.

The protein belongs to the queuine tRNA-ribosyltransferase family. In terms of assembly, homodimer. Within each dimer, one monomer is responsible for RNA recognition and catalysis, while the other monomer binds to the replacement base PreQ1. The cofactor is Zn(2+).

The catalysed reaction is 7-aminomethyl-7-carbaguanine + guanosine(34) in tRNA = 7-aminomethyl-7-carbaguanosine(34) in tRNA + guanine. It participates in tRNA modification; tRNA-queuosine biosynthesis. Functionally, catalyzes the base-exchange of a guanine (G) residue with the queuine precursor 7-aminomethyl-7-deazaguanine (PreQ1) at position 34 (anticodon wobble position) in tRNAs with GU(N) anticodons (tRNA-Asp, -Asn, -His and -Tyr). Catalysis occurs through a double-displacement mechanism. The nucleophile active site attacks the C1' of nucleotide 34 to detach the guanine base from the RNA, forming a covalent enzyme-RNA intermediate. The proton acceptor active site deprotonates the incoming PreQ1, allowing a nucleophilic attack on the C1' of the ribose to form the product. After dissociation, two additional enzymatic reactions on the tRNA convert PreQ1 to queuine (Q), resulting in the hypermodified nucleoside queuosine (7-(((4,5-cis-dihydroxy-2-cyclopenten-1-yl)amino)methyl)-7-deazaguanosine). This chain is Queuine tRNA-ribosyltransferase, found in Helicobacter pylori (strain ATCC 700392 / 26695) (Campylobacter pylori).